Reading from the N-terminus, the 557-residue chain is Tripeptidyl-peptidase 1 (557 aa).

An N-terminal signal peptide occupies residues 1-16 (MRVAVFVLSFIWLVNG). The propeptide at 17–190 (ELLEADQDAV…WEGARQAILG (174 aa)) is removed in mature form. N53 is a glycosylation site (N-linked (GlcNAc...) asparagine). The cysteines at positions 107 and 118 are disulfide-linked. In terms of domain architecture, Peptidase S53 spans 194 to 557 (GVTPAVIRNR…YPVFLASLMD (364 aa)). Residues N205 and N216 are each glycosylated (N-linked (GlcNAc...) asparagine). Catalysis depends on charge relay system residues E266 and D270. Residues N280, N307, and N438 are each glycosylated (N-linked (GlcNAc...) asparagine). 2 cysteine pairs are disulfide-bonded: C359-C521 and C517-C532. The active-site Charge relay system is S470. Residues D512 and V513 each coordinate Ca(2+). Residue D538 participates in Ca(2+) binding.

The cofactor is Ca(2+). Activated by autocatalytic proteolytical processing.

Its subcellular location is the lysosome. It carries out the reaction Release of an N-terminal tripeptide from a polypeptide, but also has endopeptidase activity.. Functionally, lysosomal serine protease with tripeptidyl-peptidase I activity. May act as a non-specific lysosomal peptidase which generates tripeptides from the breakdown products produced by lysosomal proteinases. Requires substrates with an unsubstituted N-terminus. The polypeptide is Tripeptidyl-peptidase 1 (Danio rerio (Zebrafish)).